The following is a 341-amino-acid chain: Long-chain acyl-[acyl-carrier-protein] reductase (341 aa).

The protein belongs to the short-chain dehydrogenases/reductases (SDR) family. The cofactor is a divalent metal cation.

It catalyses the reaction a long-chain fatty aldehyde + holo-[ACP] + NADP(+) = a long-chain fatty acyl-[ACP] + NADPH + H(+). The catalysed reaction is a long-chain fatty aldehyde + holo-[ACP] + NAD(+) = a long-chain fatty acyl-[ACP] + NADH + H(+). In terms of biological role, catalyzes the NADP-dependent reduction of long-chain acyl-ACP to the corresponding fatty aldehyde. Involved in the biosynthesis of alkanes, mainly heptadecane and pentadecane, by producing the fatty aldehydes used by aldehyde decarbonylase. This Synechococcus elongatus (strain ATCC 33912 / PCC 7942 / FACHB-805) (Anacystis nidulans R2) protein is Long-chain acyl-[acyl-carrier-protein] reductase.